A 759-amino-acid polypeptide reads, in one-letter code: Phosphoribosylformylglycinamidine synthase subunit PurL (759 aa).

H46 is an active-site residue. Y49 and K88 together coordinate ATP. Position 90 (E90) interacts with Mg(2+). Residues 91–94 and R113 contribute to the substrate site; that span reads SHNH. H92 functions as the Proton acceptor in the catalytic mechanism. A Mg(2+)-binding site is contributed by D114. Q237 is a substrate binding site. Residue D265 coordinates Mg(2+). Substrate is bound at residue 309–311; the sequence is ESQ. The ATP site is built by D498 and G535. Mg(2+) is bound at residue N536. S538 contacts substrate.

The protein belongs to the FGAMS family. As to quaternary structure, monomer. Part of the FGAM synthase complex composed of 1 PurL, 1 PurQ and 2 PurS subunits.

The protein localises to the cytoplasm. It catalyses the reaction N(2)-formyl-N(1)-(5-phospho-beta-D-ribosyl)glycinamide + L-glutamine + ATP + H2O = 2-formamido-N(1)-(5-O-phospho-beta-D-ribosyl)acetamidine + L-glutamate + ADP + phosphate + H(+). It participates in purine metabolism; IMP biosynthesis via de novo pathway; 5-amino-1-(5-phospho-D-ribosyl)imidazole from N(2)-formyl-N(1)-(5-phospho-D-ribosyl)glycinamide: step 1/2. Its function is as follows. Part of the phosphoribosylformylglycinamidine synthase complex involved in the purines biosynthetic pathway. Catalyzes the ATP-dependent conversion of formylglycinamide ribonucleotide (FGAR) and glutamine to yield formylglycinamidine ribonucleotide (FGAM) and glutamate. The FGAM synthase complex is composed of three subunits. PurQ produces an ammonia molecule by converting glutamine to glutamate. PurL transfers the ammonia molecule to FGAR to form FGAM in an ATP-dependent manner. PurS interacts with PurQ and PurL and is thought to assist in the transfer of the ammonia molecule from PurQ to PurL. This Anaeromyxobacter dehalogenans (strain 2CP-1 / ATCC BAA-258) protein is Phosphoribosylformylglycinamidine synthase subunit PurL.